The sequence spans 182 residues: dTTP/UTP pyrophosphatase (182 aa).

Catalysis depends on Asp-64, which acts as the Proton acceptor.

This sequence belongs to the Maf family. YhdE subfamily. It depends on a divalent metal cation as a cofactor.

It is found in the cytoplasm. It carries out the reaction dTTP + H2O = dTMP + diphosphate + H(+). The catalysed reaction is UTP + H2O = UMP + diphosphate + H(+). Functionally, nucleoside triphosphate pyrophosphatase that hydrolyzes dTTP and UTP. May have a dual role in cell division arrest and in preventing the incorporation of modified nucleotides into cellular nucleic acids. This Thermosipho melanesiensis (strain DSM 12029 / CIP 104789 / BI429) protein is dTTP/UTP pyrophosphatase.